The primary structure comprises 289 residues: ATP synthase gamma chain (289 aa).

Belongs to the ATPase gamma chain family. As to quaternary structure, F-type ATPases have 2 components, CF(1) - the catalytic core - and CF(0) - the membrane proton channel. CF(1) has five subunits: alpha(3), beta(3), gamma(1), delta(1), epsilon(1). CF(0) has three main subunits: a, b and c.

The protein resides in the cell membrane. Its function is as follows. Produces ATP from ADP in the presence of a proton gradient across the membrane. The gamma chain is believed to be important in regulating ATPase activity and the flow of protons through the CF(0) complex. This is ATP synthase gamma chain from Lactococcus lactis subsp. cremoris (strain MG1363).